The sequence spans 1485 residues: Chromosome partition protein MukB (1485 aa).

An ATP-binding site is contributed by 34–41 (GGNGAGKS). 2 coiled-coil regions span residues 337–480 (LNLV…QAYQ) and 509–605 (QHLA…PVWL). A flexible hinge region spans residues 666-783 (PSGAEDARLI…EVPLFGRAAR (118 aa)). Coiled coils occupy residues 835–915 (EAEI…IQQH) and 977–1116 (GMLT…AKAG).

It belongs to the SMC family. MukB subfamily. In terms of assembly, homodimerization via its hinge domain. Binds to DNA via its C-terminal region. Interacts, and probably forms a ternary complex, with MukE and MukF via its C-terminal region. The complex formation is stimulated by calcium or magnesium. Interacts with tubulin-related protein FtsZ.

The protein resides in the cytoplasm. It is found in the nucleoid. Functionally, plays a central role in chromosome condensation, segregation and cell cycle progression. Functions as a homodimer, which is essential for chromosome partition. Involved in negative DNA supercoiling in vivo, and by this means organize and compact chromosomes. May achieve or facilitate chromosome segregation by condensation DNA from both sides of a centrally located replisome during cell division. The chain is Chromosome partition protein MukB from Yersinia pseudotuberculosis serotype O:3 (strain YPIII).